The primary structure comprises 37 residues: Hemextin A (37 aa).

Heterotetramer composed of two A and two B chains; non-covalently linked. Does not exist as a complex in the crude venom. May contain several disulfide bonds. Expressed by the venom gland.

It is found in the secreted. In terms of biological role, hemextin A (monomer): exhibits mild anticoagulant activity. It specifically inhibits the activation of FX (F10) by the TF-FVIIa complex (extrinsic tenase complex (ETC)) by non-competitively inhibiting the enzymatic activity of FVIIa. Its function is as follows. Hemextin AB complex: specifically inhibits the activation of FX (F10) by the TF-FVIIa complex (extrinsic tenase complex (ETC)) (IC(50)= 100 nM, Ki=25 nM) by non-competitively inhibiting the enzymatic activity of FVIIa. The sequence is that of Hemextin A from Hemachatus haemachatus (Rinkhals).